The following is a 378-amino-acid chain: Ribosomal RNA large subunit methyltransferase G (378 aa).

The protein belongs to the methyltransferase superfamily. RlmG family.

Its subcellular location is the cytoplasm. The catalysed reaction is guanosine(1835) in 23S rRNA + S-adenosyl-L-methionine = N(2)-methylguanosine(1835) in 23S rRNA + S-adenosyl-L-homocysteine + H(+). Its function is as follows. Specifically methylates the guanine in position 1835 (m2G1835) of 23S rRNA. The protein is Ribosomal RNA large subunit methyltransferase G of Salmonella paratyphi A (strain ATCC 9150 / SARB42).